The chain runs to 56 residues: Small ribosomal subunit protein uS14 (56 aa).

Residues cysteine 21, cysteine 24, cysteine 39, and cysteine 42 each coordinate Zn(2+).

The protein belongs to the universal ribosomal protein uS14 family. In terms of assembly, component of the 40S small ribosomal subunit. Zn(2+) is required as a cofactor.

It is found in the cytoplasm. The protein localises to the cytosol. It localises to the rough endoplasmic reticulum. The sequence is that of Small ribosomal subunit protein uS14 (RpS29) from Plutella xylostella (Diamondback moth).